We begin with the raw amino-acid sequence, 40 residues long: Photosystem II reaction center protein J (40 aa).

A helical transmembrane segment spans residues 8–28; the sequence is IPLWLVATVAGLAAIGVLGIF.

This sequence belongs to the PsbJ family. PSII is composed of 1 copy each of membrane proteins PsbA, PsbB, PsbC, PsbD, PsbE, PsbF, PsbH, PsbI, PsbJ, PsbK, PsbL, PsbM, PsbT, PsbX, PsbY, PsbZ, Psb30/Ycf12, at least 3 peripheral proteins of the oxygen-evolving complex and a large number of cofactors. It forms dimeric complexes.

It localises to the plastid. The protein localises to the cyanelle thylakoid membrane. Its function is as follows. One of the components of the core complex of photosystem II (PSII). PSII is a light-driven water:plastoquinone oxidoreductase that uses light energy to abstract electrons from H(2)O, generating O(2) and a proton gradient subsequently used for ATP formation. It consists of a core antenna complex that captures photons, and an electron transfer chain that converts photonic excitation into a charge separation. The sequence is that of Photosystem II reaction center protein J from Cyanophora paradoxa.